The sequence spans 121 residues: Basic phospholipase A2 BmTX-I (121 aa).

Cystine bridges form between cysteine 26-cysteine 114, cysteine 28-cysteine 45, cysteine 44-cysteine 95, cysteine 50-cysteine 121, cysteine 51-cysteine 88, cysteine 58-cysteine 82, and cysteine 76-cysteine 86. The Ca(2+) site is built by tyrosine 27, glycine 29, and glycine 31. Histidine 48 is a catalytic residue. Residue aspartate 49 participates in Ca(2+) binding. Aspartate 89 is an active-site residue.

Ca(2+) is required as a cofactor. Expressed by the venom gland.

It localises to the secreted. It carries out the reaction a 1,2-diacyl-sn-glycero-3-phosphocholine + H2O = a 1-acyl-sn-glycero-3-phosphocholine + a fatty acid + H(+). Its activity is regulated as follows. Inhibited by magnesium, cadmium and manganese ions. Also inhibited by crotapotin. In terms of biological role, snake venom phospholipase A2 (PLA2) that shows enzymatic activity in the presence of a synthetic substrate. In vitro, blocks the neuromuscular transmission in young chick biventer cervicis preparations. In mice, induces myonecrosis and a systemic interleukin-6 response upon intramuscular injection. Also induces edema and exerts a strong pro-inflammatory effect. PLA2 catalyzes the calcium-dependent hydrolysis of the 2-acyl groups in 3-sn-phosphoglycerides. The polypeptide is Basic phospholipase A2 BmTX-I (Bothrops moojeni (Lance-headed viper)).